The following is a 410-amino-acid chain: MILIIYRALFFVTIPGVNSAALAKLSNNSSLTMLSMFSGGGFENFSIMSLGVTAYITAQIIVQLLQADVIPTFTQWSKEGQTGRKKLDQVTRSLTLVLGLVQATGITLGINTLTNGKFMIENNPFTIIVIAVSMTAGSFIAMWLGDLITENGLGNGISVIITAGILVRFPSMINDVIKGVTFGTKVNWIRFSELMIGAAILILLIVWFTRSELRIPIQYARRAQLTGKDSYLPLKIIVPGVIPVIFASTIMTIPQTILMFFNAGQNSSWYRVVQTFFTLSTTSGVIIYGLMIIFFEYLYSIVQIEPDKFADNLEKQEAYIPNVYPGDPTKEFIQNMLNYLSLPGSLFLMLVSIIPLLVANSVSSSLQIGLSGSSILIITGVLIEIGRQIKGLKLKREYGTFLSTDFSLDD.

Helical transmembrane passes span 2-22 (ILII…SAAL), 45-65 (FSIM…VQLL), 94-114 (LTLV…NTLT), 125-145 (FTII…MWLG), 147-167 (LITE…GILV), 188-208 (WIRF…IVWF), 241-261 (VIPV…LMFF), 284-304 (GVII…IVQI), 339-359 (YLSL…LLVA), and 366-386 (LQIG…IEIG).

Belongs to the SecY/SEC61-alpha family. In terms of assembly, component of the Sec protein translocase complex. Heterotrimer consisting of SecY, SecE and SecG subunits. The heterotrimers can form oligomers, although 1 heterotrimer is thought to be able to translocate proteins. Interacts with the ribosome. Interacts with SecDF, and other proteins may be involved. Interacts with SecA.

It is found in the cell membrane. In terms of biological role, the central subunit of the protein translocation channel SecYEG. Consists of two halves formed by TMs 1-5 and 6-10. These two domains form a lateral gate at the front which open onto the bilayer between TMs 2 and 7, and are clamped together by SecE at the back. The channel is closed by both a pore ring composed of hydrophobic SecY resides and a short helix (helix 2A) on the extracellular side of the membrane which forms a plug. The plug probably moves laterally to allow the channel to open. The ring and the pore may move independently. This chain is Protein translocase subunit SecY 2, found in Lactobacillus kefiranofaciens subsp. kefiranofaciens.